Reading from the N-terminus, the 157-residue chain is Transcriptional repressor NrdR (157 aa).

A zinc finger spans residues 3–34 (CPSCQNTDSRVLESRSADAGKCVRRRRECLNC). Positions 49-139 (VTVIKRSNAK…VYRQFNGIED (91 aa)) constitute an ATP-cone domain.

It belongs to the NrdR family. Requires Zn(2+) as cofactor.

In terms of biological role, negatively regulates transcription of bacterial ribonucleotide reductase nrd genes and operons by binding to NrdR-boxes. The protein is Transcriptional repressor NrdR of Prochlorococcus marinus (strain SARG / CCMP1375 / SS120).